The sequence spans 236 residues: Pyridoxine 5'-phosphate synthase (236 aa).

Asparagine 6 is a binding site for 3-amino-2-oxopropyl phosphate. Aspartate 8 to histidine 9 is a binding site for 1-deoxy-D-xylulose 5-phosphate. Arginine 17 lines the 3-amino-2-oxopropyl phosphate pocket. Residue histidine 42 is the Proton acceptor of the active site. 1-deoxy-D-xylulose 5-phosphate is bound by residues arginine 44 and histidine 49. The active-site Proton acceptor is the glutamate 69. Threonine 99 contributes to the 1-deoxy-D-xylulose 5-phosphate binding site. Histidine 190 (proton donor) is an active-site residue. 3-amino-2-oxopropyl phosphate is bound by residues glycine 191 and glycine 212–histidine 213.

Belongs to the PNP synthase family. Homooctamer; tetramer of dimers.

The protein localises to the cytoplasm. It catalyses the reaction 3-amino-2-oxopropyl phosphate + 1-deoxy-D-xylulose 5-phosphate = pyridoxine 5'-phosphate + phosphate + 2 H2O + H(+). The protein operates within cofactor biosynthesis; pyridoxine 5'-phosphate biosynthesis; pyridoxine 5'-phosphate from D-erythrose 4-phosphate: step 5/5. Catalyzes the complicated ring closure reaction between the two acyclic compounds 1-deoxy-D-xylulose-5-phosphate (DXP) and 3-amino-2-oxopropyl phosphate (1-amino-acetone-3-phosphate or AAP) to form pyridoxine 5'-phosphate (PNP) and inorganic phosphate. This is Pyridoxine 5'-phosphate synthase from Pelodictyon phaeoclathratiforme (strain DSM 5477 / BU-1).